The primary structure comprises 358 residues: Myb family transcription factor APL (358 aa).

The 61-residue stretch at Thr31–Gln91 folds into the HTH myb-type domain. Residues Pro62–Arg87 constitute a DNA-binding region (H-T-H motif). Residues Arg125–Gln145 adopt a coiled-coil conformation. The short motif at Leu138–Glu143 is the LHEQLE element. Residues Arg313–Gly358 form a disordered region.

The protein belongs to the MYB-CC family. Expressed in shoots and roots, specifically in the developing protophloem sieve elements. Detected in phloem and/or cambium. Expressed in the phloem tissues of various organs, including leaves and cotyledons, during vegetative growth.

It is found in the nucleus. Functionally, transcription factor required for phloem identity. Has a dual role both in promoting phloem differentiation and in repressing xylem differentiation during vascular development. Regulates the expression of the transcription factor NAC045 (AC A4VCM0). May activate the transcription of specific genes involved in phosphate uptake or assimilation. Promotes flowering through transcriptional activation of both FT and its transport machinery component, FTIP1. This chain is Myb family transcription factor APL, found in Arabidopsis thaliana (Mouse-ear cress).